Reading from the N-terminus, the 275-residue chain is Probable aquaporin NIP7-1 (275 aa).

Residues 1–11 (MNGEARSRVVD) are compositionally biased toward basic and acidic residues. Residues 1–26 (MNGEARSRVVDQEAGSTPSTLRDEDH) are disordered. 2 consecutive transmembrane segments (helical) span residues 47-67 (IVMAELVGTFILMFSVCGVIS) and 76-96 (VGLLEYAVTAGLSVVVVVYSI). Positions 105 to 107 (NPS) match the NPA 1 motif. 3 helical membrane-spanning segments follow: residues 127 to 147 (ITAQTLGATAATLVGVSVYGV), 161 to 181 (VSAFFVELIATSIVVFLASAL), and 192 to 212 (LTGFVIGTVISLGVLITGPIS). An NPA 2 motif is present at residues 217-219 (NPA). A helical transmembrane segment spans residues 231–251 (FEDLWIYMTAPVIGAIIGVLT). A Phosphoserine modification is found at serine 272.

This sequence belongs to the MIP/aquaporin (TC 1.A.8) family. NIP (TC 1.A.8.12) subfamily. As to expression, expressed in floral buds.

It localises to the membrane. In terms of biological role, aquaporins facilitate the transport of water and small neutral solutes across cell membranes. In Arabidopsis thaliana (Mouse-ear cress), this protein is Probable aquaporin NIP7-1 (NIP7-1).